Here is a 379-residue protein sequence, read N- to C-terminus: Cytochrome b (379 aa).

4 consecutive transmembrane segments (helical) span residues 33 to 53 (FGSL…FLAM), 77 to 98 (WLIR…YLHI), 113 to 133 (WNVG…GYVL), and 178 to 198 (FFAF…VHLI). 2 residues coordinate heme b: H83 and H97. Positions 182 and 196 each coordinate heme b. Residue H201 coordinates a ubiquinone. Helical transmembrane passes span 226-246 (YKDI…ALFS), 288-308 (LGGV…PLLH), 320-340 (FTQV…WIGG), and 347-367 (FIII…VLAP).

This sequence belongs to the cytochrome b family. In terms of assembly, the cytochrome bc1 complex contains 3 respiratory subunits (MT-CYB, CYC1 and UQCRFS1), 2 core proteins (UQCRC1 and UQCRC2) and probably 6 low-molecular weight proteins. The cofactor is heme b.

The protein resides in the mitochondrion inner membrane. In terms of biological role, component of the ubiquinol-cytochrome c reductase complex (complex III or cytochrome b-c1 complex) that is part of the mitochondrial respiratory chain. The b-c1 complex mediates electron transfer from ubiquinol to cytochrome c. Contributes to the generation of a proton gradient across the mitochondrial membrane that is then used for ATP synthesis. This is Cytochrome b (mt-cyb) from Poeciliopsis occidentalis (Gila topminnow).